The following is an 87-amino-acid chain: Small ribosomal subunit protein eS21B (87 aa).

N-acetylmethionine is present on Met1.

The protein belongs to the eukaryotic ribosomal protein eS21 family. Component of the small ribosomal subunit (SSU). Mature yeast ribosomes consist of a small (40S) and a large (60S) subunit. The 40S small subunit contains 1 molecule of ribosomal RNA (18S rRNA) and 33 different proteins (encoded by 57 genes). The large 60S subunit contains 3 rRNA molecules (25S, 5.8S and 5S rRNA) and 46 different proteins (encoded by 81 genes). Post-translationally, N-terminally acetylated by acetyltransferase NatB.

It is found in the cytoplasm. Functionally, component of the ribosome, a large ribonucleoprotein complex responsible for the synthesis of proteins in the cell. The small ribosomal subunit (SSU) binds messenger RNAs (mRNAs) and translates the encoded message by selecting cognate aminoacyl-transfer RNA (tRNA) molecules. The large subunit (LSU) contains the ribosomal catalytic site termed the peptidyl transferase center (PTC), which catalyzes the formation of peptide bonds, thereby polymerizing the amino acids delivered by tRNAs into a polypeptide chain. The nascent polypeptides leave the ribosome through a tunnel in the LSU and interact with protein factors that function in enzymatic processing, targeting, and the membrane insertion of nascent chains at the exit of the ribosomal tunnel. eS21 is required for the processing of the 20S rRNA-precursor to mature 18S rRNA in a late step of the maturation of 40S ribosomal subunits. Has a physiological role leading to 18S rRNA stability. The protein is Small ribosomal subunit protein eS21B of Saccharomyces cerevisiae (strain ATCC 204508 / S288c) (Baker's yeast).